The chain runs to 665 residues: Pentatricopeptide repeat-containing protein At1g04840 (665 aa).

PPR repeat units follow at residues 90 to 124 (NPFV…GVKP), 125 to 155 (DRLT…TLKN), 160 to 190 (DSFV…SPDR), 195 to 229 (SILI…NSGS), 230 to 256 (WSTL…MPEK), 257 to 291 (NVVS…GLKP), 292 to 326 (NEYT…GIKL), 327 to 357 (DRAI…MNHK), 358 to 392 (DILS…GEKP), 393 to 423 (DEVV…MRLD), and 429 to 459 (TLKH…MPIN). A type E motif region spans residues 464–539 (TWAALYRACK…SLGWSYIELD (76 aa)). Residues 540 to 570 (GQLNKFSAGDYSHKLTQEIGLKLDEIISLAI) are type E(+) motif. The interval 571–665 (QKGYNPGADW…DGRCSCGDYW (95 aa)) is type DYW motif.

This sequence belongs to the PPR family. PCMP-H subfamily.

The chain is Pentatricopeptide repeat-containing protein At1g04840 (PCMP-H64) from Arabidopsis thaliana (Mouse-ear cress).